The sequence spans 752 residues: Photosystem I P700 chlorophyll a apoprotein A1 (752 aa).

Transmembrane regions (helical) follow at residues 73–96 (IFSAHFGQLAIIFLWISGMHFHGA), 159–182 (LYWTAIGGLAMSAIMLFAGWFHYH), 198–222 (MNHHLAGLLGLGCLSWSGHQIHIAL), 294–312 (IAHHHLALSVLFIIAGHMY), 349–372 (WHAQLAINLAMMGSLSIIVAHHMY), 388–414 (LSLFTHHMWIGGFCVVGGAAHGAIFMV), 436–458 (AIISHLNWVCIFLGCHAFGFYIH), and 533–551 (FMVHHIHAFTIHVTVLILL). Residues cysteine 575 and cysteine 584 each coordinate [4Fe-4S] cluster. 2 helical membrane-spanning segments follow: residues 591–612 (HVFLGLFWMYNSISVVIFHFSW) and 666–688 (SSAYGLIFLGAHFIWAFSLMFLF). Position 677 (histidine 677) interacts with chlorophyll a'. Chlorophyll a contacts are provided by methionine 685 and tyrosine 693. Tryptophan 694 is a binding site for phylloquinone. The chain crosses the membrane as a helical span at residues 726 to 746 (AVGLAHYLLGGIGTTWAFFLA).

It belongs to the PsaA/PsaB family. As to quaternary structure, the PsaA/B heterodimer binds the P700 chlorophyll special pair and subsequent electron acceptors. PSI consists of a core antenna complex that captures photons, and an electron transfer chain that converts photonic excitation into a charge separation. The eukaryotic PSI reaction center is composed of at least 11 subunits. P700 is a chlorophyll a/chlorophyll a' dimer, A0 is one or more chlorophyll a, A1 is one or both phylloquinones and FX is a shared 4Fe-4S iron-sulfur center. serves as cofactor.

It is found in the plastid. The protein localises to the chloroplast thylakoid membrane. The enzyme catalyses reduced [plastocyanin] + hnu + oxidized [2Fe-2S]-[ferredoxin] = oxidized [plastocyanin] + reduced [2Fe-2S]-[ferredoxin]. In terms of biological role, psaA and PsaB bind P700, the primary electron donor of photosystem I (PSI), as well as the electron acceptors A0, A1 and FX. PSI is a plastocyanin/cytochrome c6-ferredoxin oxidoreductase, converting photonic excitation into a charge separation, which transfers an electron from the donor P700 chlorophyll pair to the spectroscopically characterized acceptors A0, A1, FX, FA and FB in turn. Oxidized P700 is reduced on the lumenal side of the thylakoid membrane by plastocyanin or cytochrome c6. The chain is Photosystem I P700 chlorophyll a apoprotein A1 from Thalassiosira pseudonana (Marine diatom).